The chain runs to 213 residues: Octanoyltransferase (213 aa).

The BPL/LPL catalytic domain maps to 32 to 207 (ENTPDEIWLV…NILALLNNPP (176 aa)). Residues 71–78 (RGGQVTYH), 138–140 (SLG), and 151–153 (GLA) contribute to the substrate site. Cys-169 serves as the catalytic Acyl-thioester intermediate.

This sequence belongs to the LipB family.

The protein localises to the cytoplasm. The catalysed reaction is octanoyl-[ACP] + L-lysyl-[protein] = N(6)-octanoyl-L-lysyl-[protein] + holo-[ACP] + H(+). It functions in the pathway protein modification; protein lipoylation via endogenous pathway; protein N(6)-(lipoyl)lysine from octanoyl-[acyl-carrier-protein]: step 1/2. In terms of biological role, catalyzes the transfer of endogenously produced octanoic acid from octanoyl-acyl-carrier-protein onto the lipoyl domains of lipoate-dependent enzymes. Lipoyl-ACP can also act as a substrate although octanoyl-ACP is likely to be the physiological substrate. The chain is Octanoyltransferase from Citrobacter koseri (strain ATCC BAA-895 / CDC 4225-83 / SGSC4696).